The chain runs to 332 residues: tRNA U34 carboxymethyltransferase (332 aa).

Residues Lys91, Trp105, Lys110, Gly130, 152-154, 181-182, Met196, Tyr200, and Arg315 contribute to the carboxy-S-adenosyl-L-methionine site; these read DPS and IE.

This sequence belongs to the class I-like SAM-binding methyltransferase superfamily. CmoB family. Homotetramer.

The enzyme catalyses carboxy-S-adenosyl-L-methionine + 5-hydroxyuridine(34) in tRNA = 5-carboxymethoxyuridine(34) in tRNA + S-adenosyl-L-homocysteine + H(+). In terms of biological role, catalyzes carboxymethyl transfer from carboxy-S-adenosyl-L-methionine (Cx-SAM) to 5-hydroxyuridine (ho5U) to form 5-carboxymethoxyuridine (cmo5U) at position 34 in tRNAs. The sequence is that of tRNA U34 carboxymethyltransferase from Shewanella sp. (strain W3-18-1).